The chain runs to 342 residues: tRNA N6-adenosine threonylcarbamoyltransferase (342 aa).

The Fe cation site is built by His-111 and His-115. Substrate is bound by residues 134–138 (LVSGG), Asp-167, Gly-180, and Asn-277. Asp-305 lines the Fe cation pocket.

This sequence belongs to the KAE1 / TsaD family. Fe(2+) is required as a cofactor.

It localises to the cytoplasm. It carries out the reaction L-threonylcarbamoyladenylate + adenosine(37) in tRNA = N(6)-L-threonylcarbamoyladenosine(37) in tRNA + AMP + H(+). Functionally, required for the formation of a threonylcarbamoyl group on adenosine at position 37 (t(6)A37) in tRNAs that read codons beginning with adenine. Is involved in the transfer of the threonylcarbamoyl moiety of threonylcarbamoyl-AMP (TC-AMP) to the N6 group of A37, together with TsaE and TsaB. TsaD likely plays a direct catalytic role in this reaction. This Haemophilus influenzae (strain ATCC 51907 / DSM 11121 / KW20 / Rd) protein is tRNA N6-adenosine threonylcarbamoyltransferase.